A 189-amino-acid chain; its full sequence is Protein GrpE (189 aa).

Residues 1–14 (MTDHTPLQPKHEIT) show a composition bias toward basic and acidic residues. The disordered stretch occupies residues 1 to 23 (MTDHTPLQPKHEITDQADQDTSA).

This sequence belongs to the GrpE family. Homodimer.

Its subcellular location is the cytoplasm. In terms of biological role, participates actively in the response to hyperosmotic and heat shock by preventing the aggregation of stress-denatured proteins, in association with DnaK and GrpE. It is the nucleotide exchange factor for DnaK and may function as a thermosensor. Unfolded proteins bind initially to DnaJ; upon interaction with the DnaJ-bound protein, DnaK hydrolyzes its bound ATP, resulting in the formation of a stable complex. GrpE releases ADP from DnaK; ATP binding to DnaK triggers the release of the substrate protein, thus completing the reaction cycle. Several rounds of ATP-dependent interactions between DnaJ, DnaK and GrpE are required for fully efficient folding. The protein is Protein GrpE of Lawsonia intracellularis (strain PHE/MN1-00).